The following is a 195-amino-acid chain: Protein aq_1444 (195 aa).

Positions 1–191 (MDIRELVHLG…EKEPFGEVER (191 aa)) constitute an AMMECR1 domain.

The protein is Protein aq_1444 of Aquifex aeolicus (strain VF5).